Reading from the N-terminus, the 407-residue chain is Shaggy-related protein kinase GSK1 (407 aa).

The segment covering methionine 1–alanine 19 has biased composition (pro residues). Residues methionine 1 to valine 21 are disordered. The region spanning tyrosine 68–phenylalanine 352 is the Protein kinase domain. Residues valine 74–valine 82 and lysine 97 each bind ATP. Catalysis depends on aspartate 193, which acts as the Proton acceptor.

It belongs to the protein kinase superfamily. CMGC Ser/Thr protein kinase family. GSK-3 subfamily. In terms of assembly, interacts with LIC. As to expression, highly expressed in the entire young panicles, spikelets, awns, vascular bundles of palea and lemma, stigma and rachilla. Expressed in root tips, root hairs, lamina joint in the collar region, vascular bundles of coleoptiles.

It catalyses the reaction L-seryl-[protein] + ATP = O-phospho-L-seryl-[protein] + ADP + H(+). The catalysed reaction is L-threonyl-[protein] + ATP = O-phospho-L-threonyl-[protein] + ADP + H(+). Probable serine-threonine kinase that may act as a negative regulator of brassinosteroid (BR) signaling during flower development. May have physiological roles in stress signal-transduction pathways. Phosphorylates LIC in response to BR perception. This is Shaggy-related protein kinase GSK1 from Oryza sativa subsp. japonica (Rice).